Reading from the N-terminus, the 498-residue chain is Glycerol kinase (498 aa).

T12 serves as a coordination point for ADP. Residues T12, T13, and S14 each contribute to the ATP site. Residue T12 coordinates sn-glycerol 3-phosphate. R16 is an ADP binding site. Positions 82, 83, and 134 each coordinate sn-glycerol 3-phosphate. Residues R82, E83, and Y134 each coordinate glycerol. Phosphohistidine; by HPr is present on H230. D244 serves as a coordination point for sn-glycerol 3-phosphate. Positions 244 and 245 each coordinate glycerol. ADP is bound by residues T266, G309, Q313, G410, and N414. ATP-binding residues include T266, G309, Q313, and G410.

It belongs to the FGGY kinase family. Homotetramer and homodimer (in equilibrium). The phosphoenolpyruvate-dependent sugar phosphotransferase system (PTS), including enzyme I, and histidine-containing protein (HPr) are required for the phosphorylation, which leads to the activation of the enzyme.

It catalyses the reaction glycerol + ATP = sn-glycerol 3-phosphate + ADP + H(+). It participates in polyol metabolism; glycerol degradation via glycerol kinase pathway; sn-glycerol 3-phosphate from glycerol: step 1/1. Its activity is regulated as follows. Activated by phosphorylation and inhibited by fructose 1,6-bisphosphate (FBP). Its function is as follows. Key enzyme in the regulation of glycerol uptake and metabolism. Catalyzes the phosphorylation of glycerol to yield sn-glycerol 3-phosphate. This Staphylococcus aureus (strain COL) protein is Glycerol kinase.